Here is a 350-residue protein sequence, read N- to C-terminus: MRRQDFSYELPDELIARRPTETRTGSRLLMLDGPSGELAHKQFPDLLNLVEEGDLMVFNNTRVIPARVFGQKASGGKLEILAERILDAHSILAHVRSSKAPKPGSIIILQDGTEVEMVARHEALFELRFPADTTALDVLENIGHMPLPPYIDREDEADDKERYQTVYGTQKGAVAAPTAGLHFDDVLLAKLKDKGVQQAFVTLHVGAGTFQPVRVDNIFEHHMHSEVMHVSQEVCDLIKATKAAGKRVIAVGTTSVRCLETAAQNGVVEPYQGDTDIFIYPGYQYKVVDALVTNFHLPESTLLMLVSAFAGYKHTMNAYQQAVAQCYRFFSYGDAMFITHNAEACKEEIK.

This sequence belongs to the QueA family. In terms of assembly, monomer.

The protein localises to the cytoplasm. It carries out the reaction 7-aminomethyl-7-carbaguanosine(34) in tRNA + S-adenosyl-L-methionine = epoxyqueuosine(34) in tRNA + adenine + L-methionine + 2 H(+). The protein operates within tRNA modification; tRNA-queuosine biosynthesis. In terms of biological role, transfers and isomerizes the ribose moiety from AdoMet to the 7-aminomethyl group of 7-deazaguanine (preQ1-tRNA) to give epoxyqueuosine (oQ-tRNA). This is S-adenosylmethionine:tRNA ribosyltransferase-isomerase from Saccharophagus degradans (strain 2-40 / ATCC 43961 / DSM 17024).